We begin with the raw amino-acid sequence, 351 residues long: Uroporphyrinogen decarboxylase (351 aa).

Substrate is bound by residues 25-29 (RQAGR), Asp-74, Tyr-151, Ser-206, and His-325.

Belongs to the uroporphyrinogen decarboxylase family. In terms of assembly, homodimer.

The protein resides in the cytoplasm. The enzyme catalyses uroporphyrinogen III + 4 H(+) = coproporphyrinogen III + 4 CO2. It participates in porphyrin-containing compound metabolism; protoporphyrin-IX biosynthesis; coproporphyrinogen-III from 5-aminolevulinate: step 4/4. Catalyzes the decarboxylation of four acetate groups of uroporphyrinogen-III to yield coproporphyrinogen-III. This Chlorobium chlorochromatii (strain CaD3) protein is Uroporphyrinogen decarboxylase.